A 71-amino-acid polypeptide reads, in one-letter code: Conotoxin PnMEKL-032 (71 aa).

Residues 1–19 (MQKLIILLLVAAVLMSTQA) form the signal peptide. A propeptide spanning residues 20–46 (LFQEKRLKEKINFLSKEKADAEKQQKR) is cleaved from the precursor. 3 cysteine pairs are disulfide-bonded: cysteine 48-cysteine 62, cysteine 55-cysteine 66, and cysteine 61-cysteine 70.

The protein belongs to the conotoxin O2 superfamily. Expressed by the venom duct.

It is found in the secreted. The sequence is that of Conotoxin PnMEKL-032 from Conus pennaceus (Feathered cone).